A 95-amino-acid chain; its full sequence is Co-chaperonin GroES (95 aa).

This sequence belongs to the GroES chaperonin family. As to quaternary structure, heptamer of 7 subunits arranged in a ring. Interacts with the chaperonin GroEL.

Its subcellular location is the cytoplasm. In terms of biological role, together with the chaperonin GroEL, plays an essential role in assisting protein folding. The GroEL-GroES system forms a nano-cage that allows encapsulation of the non-native substrate proteins and provides a physical environment optimized to promote and accelerate protein folding. GroES binds to the apical surface of the GroEL ring, thereby capping the opening of the GroEL channel. The protein is Co-chaperonin GroES of Desulforapulum autotrophicum (strain ATCC 43914 / DSM 3382 / VKM B-1955 / HRM2) (Desulfobacterium autotrophicum).